Reading from the N-terminus, the 462-residue chain is Glycoprotein endo-alpha-1,2-mannosidase (462 aa).

Over 1-8 (MAKFRRRT) the chain is Cytoplasmic. Residues 9–29 (CIILALFILFIFSLMMGLKML) traverse the membrane as a helical; Signal-anchor for type II membrane protein segment. At 30-462 (RPNTATFGAP…YALDRQLPVS (433 aa)) the chain is on the lumenal side. The interval 60 to 462 (DFQKSDRINS…YALDRQLPVS (403 aa)) is catalytic.

The protein belongs to the glycosyl hydrolase 99 family. Undergoes proteolytic cleavage in the C-terminal region. As to expression, highly expressed in the liver and kidney. Expressed at lower levels in muscle, pancreas, heart, placenta, lung and brain.

It localises to the golgi apparatus membrane. It catalyses the reaction N-{alpha-Glc-(1-&gt;3)-alpha-Man-(1-&gt;2)-alpha-Man-(1-&gt;2)-alpha-Man-(1-&gt;3)-[alpha-Man-(1-&gt;2)-alpha-Man-(1-&gt;3)-[alpha-Man-(1-&gt;2)-alpha-Man-(1-&gt;6)]-alpha-Man-(1-&gt;6)]-beta-Man-(1-&gt;4)-beta-GlcNAc-(1-&gt;4)-beta-GlcNAc}-L-asparaginyl-[protein] + H2O = alpha-D-glucosyl-(1-&gt;3)-D-mannopyranose + N(4)-{alpha-D-Man-(1-&gt;2)-alpha-D-Man-(1-&gt;3)-[alpha-D-Man-(1-&gt;2)-alpha-D-Man-(1-&gt;3)-[alpha-D-Man-(1-&gt;2)-alpha-D-Man-(1-&gt;6)]-alpha-D-Man-(1-&gt;6)]-beta-D-Man-(1-&gt;4)-beta-D-GlaNAc-(1-&gt;4)-beta-D-GlcNAc}-L-asparaginyl-[protein] (N-glucan mannose isomer 8A1,2,3B1,2). The sequence is that of Glycoprotein endo-alpha-1,2-mannosidase (MANEA) from Homo sapiens (Human).